Here is a 328-residue protein sequence, read N- to C-terminus: Arabinose 5-phosphate isomerase KdsD (328 aa).

The region spanning 42-184 (CEKMFWCKGK…AVALLKARGF (143 aa)) is the SIS domain. Residues 75–76 (GT), histidine 82, histidine 88, 114–123 (ALIPVLKRLH), 148–150 (KVA), threonine 222, and aspartate 275 each bind substrate. Histidine 82 serves as a coordination point for Zn(2+). The 59-residue stretch at 210 to 268 (MHTGDEIPHVKKTASLRDALLEVTRKNLGMTVICDDNMMIEGIFTDGDLRRVFDMGVDV) folds into the CBS 1 domain. A CBS 2 domain is found at 277 to 328 (MTPGGIRVRPGILAVEALNLMQSRHITSVMVADGDHLLGVLHMHDLLRAGVV).

This sequence belongs to the SIS family. GutQ/KpsF subfamily. Homotetramer.

It carries out the reaction D-arabinose 5-phosphate = D-ribulose 5-phosphate. It participates in carbohydrate biosynthesis; 3-deoxy-D-manno-octulosonate biosynthesis; 3-deoxy-D-manno-octulosonate from D-ribulose 5-phosphate: step 1/3. It functions in the pathway bacterial outer membrane biogenesis; lipopolysaccharide biosynthesis. Completely inhibited by 10 uM of nickel, copper, cadmium and mercury ions. Inhibited by zinc with an IC(50) of 1-3 uM. Metal ion inhibition may be a mechanism to control activity in vivo. In terms of biological role, involved in the biosynthesis of 3-deoxy-D-manno-octulosonate (KDO), a unique 8-carbon sugar component of lipopolysaccharides (LPSs). KdsD is not essential in the KDO biosynthesis and can be substituted by GutQ. Catalyzes the reversible aldol-ketol isomerization between D-ribulose 5-phosphate (Ru5P) and D-arabinose 5-phosphate (A5P). This Escherichia coli (strain K12) protein is Arabinose 5-phosphate isomerase KdsD (kdsD).